Reading from the N-terminus, the 313-residue chain is Adhesin MafA 1 (313 aa).

The N-terminal stretch at 1 to 14 (MKILLLLIPLVLTA) is a signal peptide. Cys15 carries N-palmitoyl cysteine lipidation. A lipid anchor (S-diacylglycerol cysteine) is attached at Cys15. Residues 282 to 298 (GDTTAQNRPDFKQNNGK) are compositionally biased toward polar residues. The tract at residues 282 to 313 (GDTTAQNRPDFKQNNGKNPDVGNEVIRRRKGG) is disordered.

It belongs to the MafA family.

It localises to the cell outer membrane. This is Adhesin MafA 1 (mafA1) from Neisseria meningitidis serogroup C / serotype 2a (strain ATCC 700532 / DSM 15464 / FAM18).